A 114-amino-acid chain; its full sequence is Cuticle protein CP1158 (114 aa).

Gln-1 bears the Pyrrolidone carboxylic acid mark. 4 tandem repeats follow at residues 1 to 17 (QVGY…NIQF), 26 to 43 (VLKG…NLQL), 70 to 87 (SVVG…VQFS), and 95 to 112 (VLVG…NLQL).

As to expression, calcified shell.

The sequence is that of Cuticle protein CP1158 from Cancer pagurus (Rock crab).